The primary structure comprises 176 residues: Pituitary adenylate cyclase-activating polypeptide (176 aa).

A signal peptide spans 1-24 (MTMCSGARLALLVYGILMHSSVYG). Residues 25–80 (SPAASGLRFPGIRPENEAYDEDGNPQQDFYDSEPPGVGSPASALRDAYALYYPAEE) constitute a propeptide that is removed on maturation. Disordered stretches follow at residues 36-62 (IRPE…PGVG) and 115-134 (GTPG…RHSD). The interval 150-158 (VKKYLAAVL) is important for receptor binding. L158 is modified (leucine amide). A Lysine amide modification is found at K169. The propeptide occupies 173–176 (IPYL).

The protein belongs to the glucagon family.

It is found in the secreted. PACAP is a neuropeptide involved in diverse array of physiological processes through activating the PACAP subfamily of class B1 G protein-coupled receptors: VIP receptor 1 (VIPR1), VIP receptor 2 (VIPR2), and PACAP type I receptor (ADCYAP1R1). Exerts neuroprotective and general cytoprotective effects due to anti-apoptotic, anti-inflammatory, and antioxidant actions. Promotes neuron projection development through the RAPGEF2/Rap1/B-Raf/ERK pathway. In chromaffin cells, induces long-lasting increase of intracellular calcium concentrations and neuroendocrine secretion. Involved in the control of glucose homeostasis, induces insulin secretion by pancreatic beta cells. PACAP exists in two bioactive forms from proteolysis of the same precursor protein, PACAP27 and PACAP38, which differ by eleven amino acid residues in the C-terminus. The sequence is that of Pituitary adenylate cyclase-activating polypeptide (ADCYAP1) from Ovis aries (Sheep).